Consider the following 92-residue polypeptide: Small ribosomal subunit protein uS19c (92 aa).

Belongs to the universal ribosomal protein uS19 family.

The protein resides in the plastid. It is found in the chloroplast. In terms of biological role, protein S19 forms a complex with S13 that binds strongly to the 16S ribosomal RNA. The chain is Small ribosomal subunit protein uS19c from Cucumis sativus (Cucumber).